Consider the following 130-residue polypeptide: Methylglyoxal synthase (130 aa).

Residues 1–130 enclose the MGS-like domain; it reads MSKPRIALIA…DLARNMQDVC (130 aa). Substrate-binding positions include histidine 11, lysine 15, 37 to 40, and 57 to 58; these read TGTT and SG. The Proton donor/acceptor role is filled by aspartate 63. Histidine 90 is a binding site for substrate.

This sequence belongs to the methylglyoxal synthase family.

It catalyses the reaction dihydroxyacetone phosphate = methylglyoxal + phosphate. Its function is as follows. Catalyzes the formation of methylglyoxal from dihydroxyacetone phosphate. The polypeptide is Methylglyoxal synthase (Burkholderia orbicola (strain AU 1054)).